Here is a 149-residue protein sequence, read N- to C-terminus: MEKRKDTKTTIVKSSETTKSWYVVDAAGKTLGRLSSEVAKILRGKHKVTYTPHVAMGDGVIVINAEKVRLTGAKKGQKIYRYYTGYISGMREIPFENMMARKPNYIIEHAIKGMMPRTRLGKKQLKSLRIVKGDSYETFESQKPILLDI.

This sequence belongs to the universal ribosomal protein uL13 family. Part of the 50S ribosomal subunit.

Functionally, this protein is one of the early assembly proteins of the 50S ribosomal subunit, although it is not seen to bind rRNA by itself. It is important during the early stages of 50S assembly. This is Large ribosomal subunit protein uL13 from Chlamydia pneumoniae (Chlamydophila pneumoniae).